Here is a 205-residue protein sequence, read N- to C-terminus: Cytochrome c oxidase subunit 3 (205 aa).

Transmembrane regions (helical) follow at residues 29–49 (TIVFLSQELMFFAGLFAMYFV), 73–93 (LAITVILVSSSVTCQFGVFAA), 104–124 (WFLITIILGSIFVIGQAYEYF), 144–164 (ITTGFHAAHVIAGVIAFVVVL), and 184–204 (SYYWHFVDVVWIGLFITIYFI).

It belongs to the cytochrome c oxidase subunit 3 family. Associates with subunits I, II and IV to form cytochrome c oxidase.

Its subcellular location is the cell membrane. It catalyses the reaction 4 Fe(II)-[cytochrome c] + O2 + 8 H(+)(in) = 4 Fe(III)-[cytochrome c] + 2 H2O + 4 H(+)(out). The sequence is that of Cytochrome c oxidase subunit 3 (ctaE) from Corynebacterium efficiens (strain DSM 44549 / YS-314 / AJ 12310 / JCM 11189 / NBRC 100395).